Reading from the N-terminus, the 125-residue chain is MRPRCCILALVCWITVFLLQCSKGTTDAPVGSGLWLCQPTPRCGNKIYNPSEQCCYDDAILSLKETRRCGSTCTFWPCFELCCPESFGPQQKFLVKLRVLGMKSQCHLSPISRSCTRNRRHVLYP.

An N-terminal signal peptide occupies residues 1–24 (MRPRCCILALVCWITVFLLQCSKG).

Belongs to the IGFL family. In terms of tissue distribution, detected in the cerebellum.

It is found in the secreted. In terms of biological role, potential ligand of the IGFLR1 cell membrane receptor. The polypeptide is Insulin growth factor-like family member 3 (IGFL3) (Homo sapiens (Human)).